The chain runs to 166 residues: Heavy metal-associated isoprenylated plant protein 45 (166 aa).

The region spanning 15–78 (LSIVELLVDM…MVKRTGRTAE (64 aa)) is the HMA domain. The a metal cation site is built by cysteine 26 and cysteine 29. Cysteine 163 carries the post-translational modification Cysteine methyl ester. Cysteine 163 is lipidated: S-farnesyl cysteine. The propeptide at 164–166 (TIM) is removed in mature form.

The protein belongs to the HIPP family.

In terms of biological role, heavy-metal-binding protein. In Arabidopsis thaliana (Mouse-ear cress), this protein is Heavy metal-associated isoprenylated plant protein 45.